We begin with the raw amino-acid sequence, 214 residues long: LexA repressor (214 aa).

The segment at residues 26–46 (VREIGEAVGLSSSSTVHSYLK) is a DNA-binding region (H-T-H motif). Active-site for autocatalytic cleavage activity residues include Ser-138 and Lys-175.

This sequence belongs to the peptidase S24 family. In terms of assembly, homodimer.

It carries out the reaction Hydrolysis of Ala-|-Gly bond in repressor LexA.. In terms of biological role, represses a number of genes involved in the response to DNA damage (SOS response), including recA and lexA. In the presence of single-stranded DNA, RecA interacts with LexA causing an autocatalytic cleavage which disrupts the DNA-binding part of LexA, leading to derepression of the SOS regulon and eventually DNA repair. The polypeptide is LexA repressor (Desulforamulus reducens (strain ATCC BAA-1160 / DSM 100696 / MI-1) (Desulfotomaculum reducens)).